Consider the following 122-residue polypeptide: Large ribosomal subunit protein uL14 (122 aa).

Belongs to the universal ribosomal protein uL14 family. In terms of assembly, part of the 50S ribosomal subunit. Forms a cluster with proteins L3 and L19. In the 70S ribosome, L14 and L19 interact and together make contacts with the 16S rRNA in bridges B5 and B8.

In terms of biological role, binds to 23S rRNA. Forms part of two intersubunit bridges in the 70S ribosome. The protein is Large ribosomal subunit protein uL14 of Bifidobacterium animalis subsp. lactis (strain AD011).